The chain runs to 461 residues: MLHIHNTLTRRKEAFVPIAPGKVRMYVCGMTVYDYCHLGHARVMVVFDMVARWLRASGFELTYVRNITDIDDKIIRRAGEKGESIRTLTDRFIAAMHEDADALGVLRPDHEPRATEYVMQMQSLIGRLRDKGLAYVAGNRDVCYSVRKFDSYGRFSGKSLDELRAGERVEVAGDKQDPLDFVLWKHARTDEPDEVKWASPWGAGRPGWHIECSAMSSDLLGEQFDIHGGGQDLQFPHHENEIAQSEGAHGHTFVNYWMHNGFVRVDDEKMSKSLGNFFTIRDVLERFDPEVVRFFILRAHYRSPLNYSDAHLEDARQALTRLYTALRNVQPSDAQVDWDEPHAMRFRAAMDDDFNTAEAVAVLFELANEANRSGSAATAAQLKGLGGVLGLLAREPASFLQGRMAGEPDKGEGVAIESMIERRALAKKSKDYAEADRIRAQLLASGIVLEDTPHGTVWRRA.

Position 28 (cysteine 28) interacts with Zn(2+). The 'HIGH' region motif lies at methionine 30–histidine 40. Zn(2+)-binding residues include cysteine 212, histidine 237, and glutamate 241. The 'KMSKS' region motif lies at lysine 269–serine 273. Lysine 272 contacts ATP.

The protein belongs to the class-I aminoacyl-tRNA synthetase family. In terms of assembly, monomer. Zn(2+) is required as a cofactor.

It is found in the cytoplasm. It carries out the reaction tRNA(Cys) + L-cysteine + ATP = L-cysteinyl-tRNA(Cys) + AMP + diphosphate. The polypeptide is Cysteine--tRNA ligase (Aromatoleum aromaticum (strain DSM 19018 / LMG 30748 / EbN1) (Azoarcus sp. (strain EbN1))).